Here is a 593-residue protein sequence, read N- to C-terminus: Glutamate decarboxylase 1 (593 aa).

Residues 1 to 12 are compositionally biased toward low complexity; that stretch reads MASSTPSPATSS. The interval 1–22 is disordered; that stretch reads MASSTPSPATSSNAGADPNTTN. S77 is subject to Phosphoserine. Position 189 to 191 (189 to 191) interacts with 4-aminobutanoate; the sequence is QLS. At K404 the chain carries N6-(pyridoxal phosphate)lysine. R566 contributes to the 4-aminobutanoate binding site.

It belongs to the group II decarboxylase family. In terms of assembly, homodimer. It depends on pyridoxal 5'-phosphate as a cofactor. Expressed in brain and pancreatic islets.

The catalysed reaction is L-glutamate + H(+) = 4-aminobutanoate + CO2. Its function is as follows. Catalyzes the synthesis of the inhibitory neurotransmitter gamma-aminobutyric acid (GABA) with pyridoxal 5'-phosphate as cofactor. The sequence is that of Glutamate decarboxylase 1 (Gad1) from Rattus norvegicus (Rat).